The sequence spans 514 residues: RNA polymerase sigma factor SigA (514 aa).

The span at 135–159 shows a compositional bias: basic residues; it reads AAKKATAKKAAAKKTTAKKTAAKKS. The interval 135–205 is disordered; that stretch reads AAKKATAKKA…SDDDEDDAPA (71 aa). The sigma-70 factor domain-2 stretch occupies residues 281–351; it reads LLEANLRLVV…TRAMADQART (71 aa). The Interaction with polymerase core subunit RpoC signature appears at 305 to 308; the sequence is DLIQ. The interval 360–436 is sigma-70 factor domain-3; it reads EVINKLARVQ…DSEAVVPADA (77 aa). The tract at residues 449 to 502 is sigma-70 factor domain-4; the sequence is VLDTLSEREAGVVSMRFGLTDGQPKTLDEIGKVYGVTRERIRQIESKTMSKLRH. A DNA-binding region (H-T-H motif) is located at residues 475–494; the sequence is LDEIGKVYGVTRERIRQIES.

This sequence belongs to the sigma-70 factor family. RpoD/SigA subfamily. Interacts transiently with the RNA polymerase catalytic core.

Its subcellular location is the cytoplasm. Functionally, sigma factors are initiation factors that promote the attachment of RNA polymerase to specific initiation sites and are then released. This sigma factor is the primary sigma factor during exponential growth. In Streptomyces griseus, this protein is RNA polymerase sigma factor SigA.